Consider the following 104-residue polypeptide: L-rhamnose mutarotase (104 aa).

Y18 contacts substrate. Residue H22 is the Proton donor of the active site. Residues Y41 and 76-77 (WW) contribute to the substrate site.

The protein belongs to the rhamnose mutarotase family. As to quaternary structure, homodimer.

It is found in the cytoplasm. It carries out the reaction alpha-L-rhamnose = beta-L-rhamnose. Its pathway is carbohydrate metabolism; L-rhamnose metabolism. Its function is as follows. Involved in the anomeric conversion of L-rhamnose. This chain is L-rhamnose mutarotase, found in Escherichia coli O7:K1 (strain IAI39 / ExPEC).